A 186-amino-acid polypeptide reads, in one-letter code: Outer-membrane lipoprotein LolB (186 aa).

Positions 1–16 (MRRLAVIASLAWALGG) are cleaved as a signal peptide. Cysteine 17 carries N-palmitoyl cysteine lipidation. Cysteine 17 is lipidated: S-diacylglycerol cysteine.

Belongs to the LolB family. Monomer.

It localises to the cell outer membrane. Functionally, plays a critical role in the incorporation of lipoproteins in the outer membrane after they are released by the LolA protein. The protein is Outer-membrane lipoprotein LolB of Thiobacillus denitrificans (strain ATCC 25259 / T1).